The following is a 245-amino-acid chain: 1-(5-phosphoribosyl)-5-[(5-phosphoribosylamino)methylideneamino] imidazole-4-carboxamide isomerase (245 aa).

Asp7 functions as the Proton acceptor in the catalytic mechanism. Residue Asp129 is the Proton donor of the active site.

This sequence belongs to the HisA/HisF family.

It localises to the cytoplasm. It carries out the reaction 1-(5-phospho-beta-D-ribosyl)-5-[(5-phospho-beta-D-ribosylamino)methylideneamino]imidazole-4-carboxamide = 5-[(5-phospho-1-deoxy-D-ribulos-1-ylimino)methylamino]-1-(5-phospho-beta-D-ribosyl)imidazole-4-carboxamide. It functions in the pathway amino-acid biosynthesis; L-histidine biosynthesis; L-histidine from 5-phospho-alpha-D-ribose 1-diphosphate: step 4/9. This chain is 1-(5-phosphoribosyl)-5-[(5-phosphoribosylamino)methylideneamino] imidazole-4-carboxamide isomerase, found in Salmonella choleraesuis (strain SC-B67).